We begin with the raw amino-acid sequence, 93 residues long: Putative septation protein SpoVG (93 aa).

Belongs to the SpoVG family.

In terms of biological role, could be involved in septation. The protein is Putative septation protein SpoVG of Alkaliphilus oremlandii (strain OhILAs) (Clostridium oremlandii (strain OhILAs)).